The primary structure comprises 255 residues: Small ribosomal subunit protein uS2 (255 aa).

Residues 230-255 (QSSSGRDLGASSEVPVEPALEEAAEG) form a disordered region.

It belongs to the universal ribosomal protein uS2 family.

This is Small ribosomal subunit protein uS2 from Rhizobium leguminosarum bv. trifolii (strain WSM2304).